We begin with the raw amino-acid sequence, 2813 residues long: von Willebrand factor (2813 aa).

The first 22 residues, 1 to 22 (MIPARFAGVLLALALILPGTLC), serve as a signal peptide directing secretion. The VWFD 1 domain occupies 33–201 (ARCSLFGSDF…ALSSGEQWCE (169 aa)). Cystine bridges form between cysteine 35-cysteine 162 and cysteine 57-cysteine 200. 3 N-linked (GlcNAc...) asparagine glycosylation sites follow: asparagine 99, asparagine 156, and asparagine 211. The 54-residue stretch at 295-348 (CPAGMEYRQCVSPCARTCQSLHINEMCQERCVDGCSCPEGQLLDEGLCVESTEC) folds into the TIL 1 domain. The VWFD 2 domain occupies 386 to 560 (GECLVTGQSH…NAWKLHGDCQ (175 aa)). 3 disulfide bridges follow: cysteine 388-cysteine 524, cysteine 410-cysteine 559, and cysteine 432-cysteine 440. TIL domains are found at residues 652–707 (CPKG…KAQC) and 776–827 (CPAD…LERC). An N-linked (GlcNAc...) asparagine glycan is attached at asparagine 666. The amino-terminal stretch occupies residues 764 to 787 (SLSCRPPMVKLVCPADNLRAEGLE). Cystine bridges form between cysteine 767-cysteine 808, cysteine 776-cysteine 804, and cysteine 810-cysteine 821. Positions 788-833 (CTKTCQNYDLECMSMGCVSGCLCPPGMVRHENRCVALERCPCFHQG) are E1. The segment at 826–853 (RCPCFHQGKEYAPGETVKIGCNTCVCQD) is CX. Asparagine 857 is a glycosylation site (N-linked (GlcNAc...) asparagine). Residues 865–1032 (ATCSTIGMAH…NSWKVSSQCA (168 aa)) form the VWFD 3 domain. Intrachain disulfides connect cysteine 867–cysteine 996, cysteine 889–cysteine 1031, cysteine 898–cysteine 993, cysteine 914–cysteine 921, cysteine 1060–cysteine 1084, cysteine 1071–cysteine 1111, cysteine 1089–cysteine 1091, and cysteine 1126–cysteine 1130. The 51-residue stretch at 1146-1196 (YNSCAPACQVTCQHPEPLACPVQCVEGCHAHCPPGKILDELLQTCVDPEDC) folds into the TIL 4 domain. A glycan (N-linked (GlcNAc...) asparagine; atypical) is linked at asparagine 1147. 3 cysteine pairs are disulfide-bonded: cysteine 1149–cysteine 1169, cysteine 1153–cysteine 1165, and cysteine 1196–cysteine 1199. Asparagine 1231 is a glycosylation site (N-linked (GlcNAc...) asparagine). Cysteine 1234 and cysteine 1237 form a disulfide bridge. Threonine 1248, threonine 1255, and threonine 1256 each carry an O-linked (GalNAc...) threonine glycan. Residue serine 1263 is glycosylated (O-linked (GalNAc...) serine). A disulfide bridge links cysteine 1272 with cysteine 1458. The VWFA 1; binding site for platelet glycoprotein Ib domain occupies 1277 to 1453 (DLVFLLDGSS…DELEQQRDEI (177 aa)). O-linked (GalNAc...) threonine glycosylation is found at threonine 1468 and threonine 1477. An O-linked (GalNAc...) serine glycan is attached at serine 1486. Threonine 1487 carries an O-linked (GalNAc...) threonine glycan. In terms of domain architecture, VWFA 2 spans 1498-1665 (DVAFVLEGSD…TLPREAPDLV (168 aa)). N-linked (GlcNAc...) (complex) asparagine glycosylation occurs at asparagine 1515. N-linked (GlcNAc...) asparagine glycosylation occurs at asparagine 1574. Cysteines 1669 and 1670 form a disulfide. Threonine 1679 is a glycosylation site (O-linked (GalNAc...) threonine). Disulfide bonds link cysteine 1686/cysteine 1872, cysteine 1879/cysteine 1904, cysteine 1899/cysteine 1940, cysteine 1927/cysteine 2088, cysteine 1950/cysteine 2085, cysteine 1972/cysteine 2123, and cysteine 1993/cysteine 2001. Residues 1691 to 1871 (DVILLLDGSS…TLGNSFLHKL (181 aa)) form the VWFA 3; main binding site for collagens type I and III domain. The 177-residue stretch at 1948–2124 (CVCTGSSTRH…TVQRPGQTCQ (177 aa)) folds into the VWFD 4 domain. Residues 2216-2261 (CPRHCDGNVSSCGDHPSEGCFCPPDKVMLEGSCVPEEACTQCIGED) form an E2 region. Asparagine 2223 and asparagine 2290 each carry an N-linked (GlcNAc...) asparagine glycan. Residues 2255–2328 (TQCIGEDGVQ…CCPEYECVCD (74 aa)) enclose the VWFC 1 domain. Threonine 2298 carries an O-linked (GalNAc...) threonine glycan. Residues asparagine 2357 and asparagine 2400 are each glycosylated (N-linked (GlcNAc...) asparagine). In terms of domain architecture, VWFC 2 spans 2429 to 2495 (KVCVHRSTIY…HEGECCGRCL (67 aa)). The short motif at 2507–2509 (RGD) is the Cell attachment site element. N-linked (GlcNAc...) asparagine glycosylation is found at asparagine 2546 and asparagine 2585. The VWFC 3 domain maps to 2580–2645 (EACMLNGTVI…NTGECCGRCL (66 aa)). 4 disulfide bridges follow: cysteine 2724-cysteine 2774, cysteine 2739-cysteine 2788, cysteine 2750-cysteine 2804, and cysteine 2754-cysteine 2806. Positions 2724–2812 (CNDITARLQY…ECKCSPRKCS (89 aa)) constitute a CTCK domain. N-linked (GlcNAc...) asparagine glycosylation occurs at asparagine 2790.

Multimeric. Interacts with F8. All cysteine residues are involved in intrachain or interchain disulfide bonds. Post-translationally, N- and O-glycosylated. In terms of tissue distribution, plasma.

The protein resides in the secreted. It localises to the extracellular space. The protein localises to the extracellular matrix. Its function is as follows. Important in the maintenance of hemostasis, it promotes adhesion of platelets to the sites of vascular injury by forming a molecular bridge between sub-endothelial collagen matrix and platelet-surface receptor complex GPIb-IX-V. Also acts as a chaperone for coagulation factor VIII, delivering it to the site of injury, stabilizing its heterodimeric structure and protecting it from premature clearance from plasma. In Homo sapiens (Human), this protein is von Willebrand factor (VWF).